Reading from the N-terminus, the 389-residue chain is Acetylornithine aminotransferase (389 aa).

Pyridoxal 5'-phosphate contacts are provided by residues 104–105 (GT) and Phe-131. Residue Arg-134 participates in N(2)-acetyl-L-ornithine binding. 216-219 (DEVQ) is a binding site for pyridoxal 5'-phosphate. Lys-245 is subject to N6-(pyridoxal phosphate)lysine. Ser-273 lines the N(2)-acetyl-L-ornithine pocket. A pyridoxal 5'-phosphate-binding site is contributed by Thr-274.

This sequence belongs to the class-III pyridoxal-phosphate-dependent aminotransferase family. ArgD subfamily. In terms of assembly, homodimer. Pyridoxal 5'-phosphate is required as a cofactor.

The protein localises to the cytoplasm. The enzyme catalyses N(2)-acetyl-L-ornithine + 2-oxoglutarate = N-acetyl-L-glutamate 5-semialdehyde + L-glutamate. It participates in amino-acid biosynthesis; L-arginine biosynthesis; N(2)-acetyl-L-ornithine from L-glutamate: step 4/4. The chain is Acetylornithine aminotransferase from Methanopyrus kandleri (strain AV19 / DSM 6324 / JCM 9639 / NBRC 100938).